Consider the following 353-residue polypeptide: Probable cytochrome c oxidase subunit 2 (353 aa).

A signal peptide spans 1–42; it reads MTARELVCSQRVGQGLSRRLRPLVLAVTLGVLVVTLSGCSWS. 2 consecutive transmembrane segments (helical) span residues 63 to 83 and 110 to 130; these read LWIGAVVASLVVGVIVWGLIF and LVLTVTPFLIISMLFYFTVIV. 4 residues coordinate Cu cation: histidine 246, cysteine 287, cysteine 291, and histidine 295.

The protein belongs to the cytochrome c oxidase subunit 2 family. Cu cation serves as cofactor. It depends on heme as a cofactor.

It localises to the cell membrane. It catalyses the reaction 4 Fe(II)-[cytochrome c] + O2 + 8 H(+)(in) = 4 Fe(III)-[cytochrome c] + 2 H2O + 4 H(+)(out). Subunits I and II form the functional core of the enzyme complex. Electrons originating in cytochrome c are transferred via heme a and Cu(A) to the binuclear center formed by heme a3 and Cu(B). This Mycobacterium leprae (strain TN) protein is Probable cytochrome c oxidase subunit 2 (ctaC).